The sequence spans 183 residues: Apo-citrate lyase phosphoribosyl-dephospho-CoA transferase (183 aa).

It belongs to the CitX family.

The catalysed reaction is apo-[citrate lyase ACP] + 2'-(5''-triphospho-alpha-D-ribosyl)-3'-dephospho-CoA = holo-[citrate lyase ACP] + diphosphate. Functionally, transfers 2-(5''-triphosphoribosyl)-3'-dephosphocoenzyme-A on a serine residue to the apo-acyl carrier protein (gamma chain) of the citrate lyase to yield holo-acyl carrier protein. In Escherichia coli O45:K1 (strain S88 / ExPEC), this protein is Apo-citrate lyase phosphoribosyl-dephospho-CoA transferase.